Here is a 508-residue protein sequence, read N- to C-terminus: Histidine ammonia-lyase (508 aa).

Residues 143 to 145 constitute a cross-link (5-imidazolinone (Ala-Gly)); that stretch reads ASG. Position 144 is a 2,3-didehydroalanine (Ser) (Ser-144).

This sequence belongs to the PAL/histidase family. Post-translationally, contains an active site 4-methylidene-imidazol-5-one (MIO), which is formed autocatalytically by cyclization and dehydration of residues Ala-Ser-Gly.

The protein resides in the cytoplasm. It carries out the reaction L-histidine = trans-urocanate + NH4(+). It functions in the pathway amino-acid degradation; L-histidine degradation into L-glutamate; N-formimidoyl-L-glutamate from L-histidine: step 1/3. The protein is Histidine ammonia-lyase of Caldanaerobacter subterraneus subsp. tengcongensis (strain DSM 15242 / JCM 11007 / NBRC 100824 / MB4) (Thermoanaerobacter tengcongensis).